We begin with the raw amino-acid sequence, 610 residues long: Solute carrier family 23 member 3 (610 aa).

Residues 1-16 (MSRSPLNPSQLRSVGS) are compositionally biased toward polar residues. Residues 1 to 32 (MSRSPLNPSQLRSVGSQDALAPLPPPAPQNPS) are disordered. Residues 1–49 (MSRSPLNPSQLRSVGSQDALAPLPPPAPQNPSTHSWDPLCGSLPWGLSC) are Cytoplasmic-facing. A helical membrane pass occupies residues 50 to 70 (LLALQHVLVMASLLCVSHLLL). Topologically, residues 71-85 (LCSLSPGGLSYSPSQ) are extracellular. A helical membrane pass occupies residues 86–106 (LLASSFFSCGMSTILQTWMGS). The Cytoplasmic portion of the chain corresponds to 107–164 (RLPLVQAPSLEFLIPALVLTSQKLPRAIQTPGNSSLMLHLCRGPSCHGLGHWNTSLQE). A helical membrane pass occupies residues 165–185 (VSGAVVVSGLLQGMMGLLGSP). Residues 186 to 187 (GH) are Extracellular-facing. Residues 188-208 (VFPHCGPLVLAPSLVVAGLSA) form a helical membrane-spanning segment. Residues 209-211 (HRE) are Cytoplasmic-facing. Residues 212–232 (VAQFCFTHWGLALLVILLMVV) traverse the membrane as a helical segment. Over 233–266 (CSQHLGSCQFHVCPWRRASTSSTHTPLPVFRLLS) the chain is Extracellular. Residues 267 to 287 (VLIPVACVWIVSAFVGFSVIP) traverse the membrane as a helical segment. The Cytoplasmic segment spans residues 288–316 (QELSAPTKAPWIWLPHPGEWNWPLLTPRA). A helical membrane pass occupies residues 317-337 (LAAGISMALAASTSSLGCYAL). At 338-355 (CGRLLHLPPPPPHACSRG) the chain is on the extracellular side. Residues 356–376 (LSLEGLGSVLAGLLGSPMGTA) form a helical membrane-spanning segment. At 377 to 394 (SSFPNVGKVGLIQAGSQQ) the chain is on the cytoplasmic side. A helical membrane pass occupies residues 395 to 414 (VAHLVGLLCVGLGLSPRLAQ). Topologically, residues 415–423 (LLTTIPLPV) are extracellular. The chain crosses the membrane as a helical span at residues 424–446 (VGGVLGVTQAVVLSAGFSSFYLA). Residues 447–452 (DIDSGR) lie on the Cytoplasmic side of the membrane. Residues 453 to 472 (NIFIVGFSIFMALLLPRWFR) form a helical membrane-spanning segment. Residues 473–486 (EAPVLFSTGWSPLD) lie on the Extracellular side of the membrane. The helical transmembrane segment at 487-507 (VLLHSLLTQPIFLAGLSGFLL) threads the bilayer. Over 508 to 610 (ENTIPGTQLE…SSREGFRSQK (103 aa)) the chain is Cytoplasmic. Positions 571-610 (PEDPGDEEGGSSEPEEMADLLPGSGEPCPESSREGFRSQK) are disordered. Over residues 573–588 (DPGDEEGGSSEPEEMA) the composition is skewed to acidic residues. Residues 601–610 (SSREGFRSQK) are compositionally biased toward basic and acidic residues.

The protein belongs to the nucleobase:cation symporter-2 (NCS2) (TC 2.A.40) family.

Its subcellular location is the membrane. The catalysed reaction is hypoxanthine(out) + Na(+)(out) = hypoxanthine(in) + Na(+)(in). Its function is as follows. Acts as a sodium-dependent hypoxanthine transporter. May show xanthine-hypoxanthine exchange activity. This Homo sapiens (Human) protein is Solute carrier family 23 member 3 (SLC23A3).